A 295-amino-acid polypeptide reads, in one-letter code: Iron-sulfur cluster carrier protein (295 aa).

ATP is bound at residue 38 to 45 (GKGGVGKS).

It belongs to the Mrp/NBP35 ATP-binding proteins family. Homodimer.

In terms of biological role, binds and transfers iron-sulfur (Fe-S) clusters to target apoproteins. Can hydrolyze ATP. This chain is Iron-sulfur cluster carrier protein, found in Pyrococcus abyssi (strain GE5 / Orsay).